Reading from the N-terminus, the 123-residue chain is Ribosome-binding factor A (123 aa).

The protein belongs to the RbfA family. In terms of assembly, monomer. Binds 30S ribosomal subunits, but not 50S ribosomal subunits or 70S ribosomes.

The protein localises to the cytoplasm. Its function is as follows. One of several proteins that assist in the late maturation steps of the functional core of the 30S ribosomal subunit. Associates with free 30S ribosomal subunits (but not with 30S subunits that are part of 70S ribosomes or polysomes). Required for efficient processing of 16S rRNA. May interact with the 5'-terminal helix region of 16S rRNA. The sequence is that of Ribosome-binding factor A from Cupriavidus metallidurans (strain ATCC 43123 / DSM 2839 / NBRC 102507 / CH34) (Ralstonia metallidurans).